The chain runs to 411 residues: MSKDALNLAQMQEQTLQLEQQSKLKQLVNEDLRKQEESVQKHHQTFLESIRAAGTLFGEGFRAFVTDRDKVTATVAGLTLLAVGVYSAKNATAVTGRYIEARLGKPSLVRETSRITVLEALRHPIQQVSRRLLSRPQDVLEGVVLSPSLEARVRDIAIMTRNIKKNRGLYRHILLYGPPGTGKTLFAKKLALHSGMDYAIMTGGDVAPMGREGVTAMHKLFDWANTSRRGLLLFVDEADAFLRKRATEKISEDLRATLNAFLYRTGQHSNKFMLILASCHPEQFDWAINACIDVMVHFDLPGQEERARLVRMYLNEYVLKPATEGKRRLKLAQFDYGRKCLEIARLTEGMSCRKIAQLAVSWQATAYASKDGVLTEAMMDACVQDFVQQHQQMMRWLKGERPGPEDEQPSS.

177–184 (GPPGTGKT) contributes to the ATP binding site.

The protein belongs to the AAA ATPase family.

In Homo sapiens (Human), this protein is ATPase family AAA domain-containing protein 3C (ATAD3C).